The sequence spans 72 residues: Dermaseptin AA-3-4 (72 aa).

The first 22 residues, 1–22 (MAFLKKSLFLVLFLGLVSLSIC), serve as a signal peptide directing secretion. Positions 23–43 (DEEKRENEDEEEQEDDEQSEE) are excised as a propeptide. Residues 24–45 (EEKRENEDEEEQEDDEQSEEKR) are disordered. Residues 30–41 (EDEEEQEDDEQS) show a composition bias toward acidic residues.

This sequence belongs to the frog skin active peptide (FSAP) family. As to expression, expressed by the skin glands.

It is found in the secreted. Its function is as follows. Possesses a potent antimicrobial activity against Gram-positive and Gram-negative bacteria. Probably acts by disturbing membrane functions with its amphipathic structure. The sequence is that of Dermaseptin AA-3-4 from Agalychnis annae (Blue-sided leaf frog).